Here is a 562-residue protein sequence, read N- to C-terminus: NAD-dependent malic enzyme (562 aa).

Residue Tyr101 is the Proton donor of the active site. Arg154 contacts NAD(+). The active-site Proton acceptor is Lys172. A divalent metal cation contacts are provided by Glu243, Asp244, and Asp267. Asp267 and Asn415 together coordinate NAD(+).

This sequence belongs to the malic enzymes family. As to quaternary structure, homotetramer. It depends on Mg(2+) as a cofactor. Requires Mn(2+) as cofactor.

The enzyme catalyses (S)-malate + NAD(+) = pyruvate + CO2 + NADH. It carries out the reaction oxaloacetate + H(+) = pyruvate + CO2. The sequence is that of NAD-dependent malic enzyme from Colwellia psychrerythraea (strain 34H / ATCC BAA-681) (Vibrio psychroerythus).